The sequence spans 351 residues: Heat-inducible transcription repressor HrcA (351 aa).

This sequence belongs to the HrcA family.

Functionally, negative regulator of class I heat shock genes (grpE-dnaK-dnaJ and groELS operons). Prevents heat-shock induction of these operons. This chain is Heat-inducible transcription repressor HrcA, found in Mycoplasma pneumoniae (strain ATCC 29342 / M129 / Subtype 1) (Mycoplasmoides pneumoniae).